The sequence spans 207 residues: N-(5'-phosphoribosyl)anthranilate isomerase (207 aa).

It belongs to the TrpF family.

It catalyses the reaction N-(5-phospho-beta-D-ribosyl)anthranilate = 1-(2-carboxyphenylamino)-1-deoxy-D-ribulose 5-phosphate. It functions in the pathway amino-acid biosynthesis; L-tryptophan biosynthesis; L-tryptophan from chorismate: step 3/5. The sequence is that of N-(5'-phosphoribosyl)anthranilate isomerase from Legionella pneumophila (strain Lens).